The following is a 290-amino-acid chain: Lipoyl synthase (290 aa).

Cysteine 34, cysteine 39, cysteine 45, cysteine 60, cysteine 64, cysteine 67, and serine 273 together coordinate [4Fe-4S] cluster. Residues 46–262 enclose the Radical SAM core domain; the sequence is WNKRHATVMI…KYIAYSKGFL (217 aa).

The protein belongs to the radical SAM superfamily. Lipoyl synthase family. It depends on [4Fe-4S] cluster as a cofactor.

It is found in the cytoplasm. It catalyses the reaction [[Fe-S] cluster scaffold protein carrying a second [4Fe-4S](2+) cluster] + N(6)-octanoyl-L-lysyl-[protein] + 2 oxidized [2Fe-2S]-[ferredoxin] + 2 S-adenosyl-L-methionine + 4 H(+) = [[Fe-S] cluster scaffold protein] + N(6)-[(R)-dihydrolipoyl]-L-lysyl-[protein] + 4 Fe(3+) + 2 hydrogen sulfide + 2 5'-deoxyadenosine + 2 L-methionine + 2 reduced [2Fe-2S]-[ferredoxin]. It functions in the pathway protein modification; protein lipoylation via endogenous pathway; protein N(6)-(lipoyl)lysine from octanoyl-[acyl-carrier-protein]: step 2/2. Functionally, catalyzes the radical-mediated insertion of two sulfur atoms into the C-6 and C-8 positions of the octanoyl moiety bound to the lipoyl domains of lipoate-dependent enzymes, thereby converting the octanoylated domains into lipoylated derivatives. The sequence is that of Lipoyl synthase from Wolbachia pipientis subsp. Culex pipiens (strain wPip).